The following is a 558-amino-acid chain: Delta-1-pyrroline-5-carboxylate dehydrogenase, mitochondrial (558 aa).

NAD(+) is bound by residues S198, K223, and 276-280 (GSTGV). The active-site Proton acceptor is the E306. C340 serves as the catalytic Nucleophile. E438 contributes to the NAD(+) binding site.

The protein belongs to the aldehyde dehydrogenase family.

The protein resides in the mitochondrion matrix. It catalyses the reaction L-glutamate 5-semialdehyde + NAD(+) + H2O = L-glutamate + NADH + 2 H(+). Its pathway is amino-acid degradation; L-proline degradation into L-glutamate; L-glutamate from L-proline: step 2/2. Irreversible conversion of delta-1-pyrroline-5-carboxylate (P5C), derived either from proline or ornithine, to glutamate. This is a necessary step in the pathway interconnecting the urea and tricarboxylic acid cycles. In Dictyostelium discoideum (Social amoeba), this protein is Delta-1-pyrroline-5-carboxylate dehydrogenase, mitochondrial.